We begin with the raw amino-acid sequence, 451 residues long: Phosphoglucosamine mutase (451 aa).

Ser-102 functions as the Phosphoserine intermediate in the catalytic mechanism. Residues Ser-102, Asp-242, Asp-244, and Asp-246 each coordinate Mg(2+). The residue at position 102 (Ser-102) is a Phosphoserine.

The protein belongs to the phosphohexose mutase family. It depends on Mg(2+) as a cofactor. Post-translationally, activated by phosphorylation.

It carries out the reaction alpha-D-glucosamine 1-phosphate = D-glucosamine 6-phosphate. In terms of biological role, catalyzes the conversion of glucosamine-6-phosphate to glucosamine-1-phosphate. The protein is Phosphoglucosamine mutase of Staphylococcus aureus (strain USA300).